We begin with the raw amino-acid sequence, 350 residues long: Divinyl chlorophyll a/b light-harvesting protein PcbB (350 aa).

6 helical membrane-spanning segments follow: residues 27 to 47 (FLAA…SFTL), 89 to 109 (IVVT…GGLM), 141 to 161 (FILG…VEWA), 202 to 222 (VMGG…WHIV), 244 to 264 (LSWA…WCAS), and 305 to 325 (LTNI…WHAL).

The protein belongs to the PsbB/PsbC family. IsiA/Pcb subfamily. The antenna complex consists of divinyl chlorophylls (a and b) and divinyl chlorophyll a/b binding proteins. Under iron-starvation forms a complex with PSI, consisting of a PSI trimer surrounded by a ring composed of 18 PcbB subunits. It depends on divinyl chlorophyll a as a cofactor. The cofactor is divinyl chlorophyll b.

The protein localises to the cellular thylakoid membrane. The antenna complex functions as a light receptor, it captures and delivers excitation energy to photosystems I. The Prochlorales pcb genes are not related to higher plant LHCs. The sequence is that of Divinyl chlorophyll a/b light-harvesting protein PcbB (pcbB) from Prochlorococcus marinus (strain MIT 9313).